A 415-amino-acid polypeptide reads, in one-letter code: Casein kinase I isoform delta (415 aa).

A Protein kinase domain is found at 9–277 (YRLGRKIGSG…YLRQLFRNLF (269 aa)). ATP contacts are provided by residues 15–23 (IGSGSFGDI) and K38. D128 functions as the Proton acceptor in the catalytic mechanism. The interval 278–364 (HRQGFSYDYV…TSPRPVSGME (87 aa)) is centrosomal localization signal (CLS). Residues 301 to 315 (ADDAERERRDREERL) show a composition bias toward basic and acidic residues. Residues 301–415 (ADDAERERRD…SSGLQSVVHR (115 aa)) are disordered. The interval 317-342 (HSRNPATRGLPSTASGRLRGTQEVAP) is autoinhibitory. A phosphoserine mark is found at S328 and S331. Residues 347 to 358 (TPTSHTANTSPR) are compositionally biased toward polar residues. At S370 the chain carries Phosphoserine. At R375 the chain carries Omega-N-methylarginine. Positions 380–400 (NISSSDLTGRQDTSRMSTSQI) are enriched in polar residues. Phosphoserine is present on residues S382, S383, S384, S407, and S411.

Belongs to the protein kinase superfamily. CK1 Ser/Thr protein kinase family. Casein kinase I subfamily. Monomer. Component of the circadian core oscillator, which includes the CRY proteins, CLOCK, or NPAS2, ARTNL/BMAL1 or ARTNL2/BMAL2, CSNK1D and/or CSNK1E, TIMELESS and the PER proteins. Interacts with DNMT1 and MAP1A. Interacts directly with PER1 and PER2 which may lead to their degradation. Interacts with MAPT/TAU, SNAPIN, DBNDD2, AIB1/NCOA3 and ESR1. Interacts with AKAP9/AKAP450; this interaction promotes centrosomal subcellular location. Binds to tubulins in mitotic cells upon DNA damage. Interacts with GJA1. Interacts with DDX3X; this interaction enhances CSNK1D kinase activity in vitro, but it is unclear whether this interaction is physiologically relevant. Interacts with FAM83A, FAM83B, FAM83E and FAM83H (via DUF1669). Post-translationally, autophosphorylated on serine and threonine residues; this autophosphorylation represses activity. Reactivated by phosphatase-mediated dephosphorylation. May be dephosphorylated by PP1.

The protein resides in the cytoplasm. It is found in the nucleus. It localises to the cytoskeleton. Its subcellular location is the microtubule organizing center. The protein localises to the centrosome. The protein resides in the perinuclear region. It is found in the cell membrane. It localises to the spindle. Its subcellular location is the golgi apparatus. It catalyses the reaction L-seryl-[protein] + ATP = O-phospho-L-seryl-[protein] + ADP + H(+). The enzyme catalyses L-threonyl-[protein] + ATP = O-phospho-L-threonyl-[protein] + ADP + H(+). It carries out the reaction L-seryl-[tau protein] + ATP = O-phospho-L-seryl-[tau protein] + ADP + H(+). The catalysed reaction is L-threonyl-[tau protein] + ATP = O-phospho-L-threonyl-[tau protein] + ADP + H(+). With respect to regulation, drug-mediated inhibition leads to a delay of the oscillations with the magnitude of this effect dependent upon the timing of drug administration. Inhibited by phosphorylation. Exhibits substrate-dependent heparin activation. Essential serine/threonine-protein kinase that regulates diverse cellular growth and survival processes including Wnt signaling, DNA repair and circadian rhythms. It can phosphorylate a large number of proteins. Casein kinases are operationally defined by their preferential utilization of acidic proteins such as caseins as substrates. Phosphorylates connexin-43/GJA1, MAP1A, SNAPIN, MAPT/TAU, TOP2A, DCK, HIF1A, EIF6, p53/TP53, DVL2, DVL3, ESR1, AIB1/NCOA3, DNMT1, PKD2, YAP1, PER1 and PER2. Central component of the circadian clock. In balance with PP1, determines the circadian period length through the regulation of the speed and rhythmicity of PER1 and PER2 phosphorylation. Controls PER1 and PER2 nuclear transport and degradation. YAP1 phosphorylation promotes its SCF(beta-TRCP) E3 ubiquitin ligase-mediated ubiquitination and subsequent degradation. DNMT1 phosphorylation reduces its DNA-binding activity. Phosphorylation of ESR1 and AIB1/NCOA3 stimulates their activity and coactivation. Phosphorylation of DVL2 and DVL3 regulates WNT3A signaling pathway that controls neurite outgrowth. Phosphorylates NEDD9/HEF1. EIF6 phosphorylation promotes its nuclear export. Triggers down-regulation of dopamine receptors in the forebrain. Activates DCK in vitro by phosphorylation. TOP2A phosphorylation favors DNA cleavable complex formation. May regulate the formation of the mitotic spindle apparatus in extravillous trophoblast. Modulates connexin-43/GJA1 gap junction assembly by phosphorylation. Probably involved in lymphocyte physiology. Regulates fast synaptic transmission mediated by glutamate. The protein is Casein kinase I isoform delta (CSNK1D) of Bos taurus (Bovine).